We begin with the raw amino-acid sequence, 196 residues long: Dephospho-CoA kinase (196 aa).

A DPCK domain is found at 5–196 (IIGLTGGIAT…QVDIALNFEL (192 aa)). ATP is bound at residue 13–18 (ATGKTT).

It belongs to the CoaE family.

The protein resides in the cytoplasm. The enzyme catalyses 3'-dephospho-CoA + ATP = ADP + CoA + H(+). It functions in the pathway cofactor biosynthesis; coenzyme A biosynthesis; CoA from (R)-pantothenate: step 5/5. Its function is as follows. Catalyzes the phosphorylation of the 3'-hydroxyl group of dephosphocoenzyme A to form coenzyme A. This Trichormus variabilis (strain ATCC 29413 / PCC 7937) (Anabaena variabilis) protein is Dephospho-CoA kinase.